Consider the following 58-residue polypeptide: uncharacterized protein (58 aa).

The protein resides in the plastid. It localises to the chloroplast. This is an uncharacterized protein from Pyropia yezoensis (Susabi-nori).